The sequence spans 710 residues: multidrug resistance regulator 2 (710 aa).

A DNA-binding region (zn(2)-C6 fungal-type) is located at residues 11–37 (CDACRSRKIKCNRQTPCASCHKSKRDC). A run of 2 helical transmembrane segments spans residues 475–495 (DLVI…LYLF) and 525–545 (LFLA…TNFL).

The protein resides in the nucleus. It is found in the membrane. Its function is as follows. Transcription factor that controls the expression of CDR1, the major multidrug efflux pump. Required for yeast cell adherence to silicone substrate and plays a role in virulence. This is multidrug resistance regulator 2 from Candida albicans (strain SC5314 / ATCC MYA-2876) (Yeast).